A 777-amino-acid chain; its full sequence is Ribosome-releasing factor 2, mitochondrial (777 aa).

The region spanning 68-353 (AKIRNIGIMA…AITMYLPSPE (286 aa)) is the tr-type G domain. Residues 77–84 (AHIDAGKT), 141–145 (DTPGH), and 195–198 (NKMD) each bind GTP.

The protein belongs to the TRAFAC class translation factor GTPase superfamily. Classic translation factor GTPase family. EF-G/EF-2 subfamily.

The protein localises to the mitochondrion. The catalysed reaction is GTP + H2O = GDP + phosphate + H(+). Functionally, mitochondrial GTPase that mediates the disassembly of ribosomes from messenger RNA at the termination of mitochondrial protein biosynthesis. Acts in collaboration with MRRF. GTP hydrolysis follows the ribosome disassembly and probably occurs on the ribosome large subunit. Not involved in the GTP-dependent ribosomal translocation step during translation elongation. The protein is Ribosome-releasing factor 2, mitochondrial of Bos taurus (Bovine).